Consider the following 134-residue polypeptide: Holo-[acyl-carrier-protein] synthase (134 aa).

Mg(2+)-binding residues include aspartate 8 and glutamate 59.

This sequence belongs to the P-Pant transferase superfamily. AcpS family. Requires Mg(2+) as cofactor.

The protein localises to the cytoplasm. It catalyses the reaction apo-[ACP] + CoA = holo-[ACP] + adenosine 3',5'-bisphosphate + H(+). In terms of biological role, transfers the 4'-phosphopantetheine moiety from coenzyme A to a Ser of acyl-carrier-protein. This chain is Holo-[acyl-carrier-protein] synthase, found in Zymomonas mobilis subsp. mobilis (strain ATCC 31821 / ZM4 / CP4).